The chain runs to 733 residues: Hypermethylated in cancer 1 protein (733 aa).

The BTB domain occupies 47–110 (CDVIIVVQNA…IYTGRLTDSV (64 aa)). The segment at 154–315 (KYCHLRGGGS…PFRGSGGSPG (162 aa)) is mediates HDAC-dependent transcriptional repression. Arginine 159 bears the Omega-N-methylarginine mark. Residues 189 to 209 (YSSPAGPPPPPAAEPPSGPDA) are disordered. Over residues 193–206 (AGPPPPPAAEPPSG) the composition is skewed to pro residues. At serine 237 the chain carries Phosphoserine. The interaction with CTBP1 stretch occupies residues 241 to 247 (GLDLSKK). The disordered stretch occupies residues 241-421 (GLDLSKKSPP…PGGHLEGYPC (181 aa)). Serine 248 is subject to Phosphoserine. Lysine 333 is modified (N6-acetyllysine; alternate). Lysine 333 is covalently cross-linked (Glycyl lysine isopeptide (Lys-Gly) (interchain with G-Cter in SUMO); alternate). A compositionally biased stretch (basic and acidic residues) spans 344 to 361 (ELVRDRGSPGERLEERGG). The residue at position 366 (serine 366) is a Phosphoserine. Residues 368–380 (GGPPLGLVPPPRY) are compositionally biased toward pro residues. 5 consecutive C2H2-type zinc fingers follow at residues 437–464 (YVCI…EEEE), 507–534 (YRCA…LTRP), 535–562 (YPCT…GLKP), 563–590 (FACD…GEKP), and 591–618 (YECQ…VGGA). Residue serine 704 is modified to Phosphoserine.

Belongs to the krueppel C2H2-type zinc-finger protein family. Hic subfamily. Self-associates. Interacts with HIC2. Interacts with CTBP1 and CTBP2. Interacts with TCF7L2 and ARID1A. Interacts with MTA1 and MBD3; indicative for an association with the NuRD complex. Interacts with SIRT1. Acetylated on several residues, including Lys-333. Lys-333 is deacetylated by SIRT1. In terms of processing, sumoylated on Lys-333 by a PIAS family member, which enhances interaction with MTA1, positively regulates transcriptional repression activity and is enhanced by HDAC4. Ubiquitously expressed with highest levels in heart and lung.

It localises to the nucleus. In terms of biological role, transcriptional repressor. Recognizes and binds to the consensus sequence '5-[CG]NG[CG]GGGCA[CA]CC-3'. May act as a tumor suppressor. Involved in development of head, face, limbs and ventral body wall. Involved in down-regulation of SIRT1 and thereby is involved in regulation of p53/TP53-dependent apoptotic DNA-damage responses. The specific target gene promoter association seems to be depend on corepressors, such as CTBP1 or CTBP2 and MTA1. In cooperation with MTA1 (indicative for an association with the NuRD complex) represses transcription from CCND1/cyclin-D1 and CDKN1C/p57Kip2 specifically in quiescent cells. Involved in regulation of the Wnt signaling pathway probably by association with TCF7L2 and preventing TCF7L2 and CTNNB1 association with promoters of TCF-responsive genes. Seems to repress transcription from E2F1 and ATOH1 which involves ARID1A, indicative for the participation of a distinct SWI/SNF-type chromatin-remodeling complex. Probably represses transcription from ACKR3, FGFBP1 and EFNA1. The polypeptide is Hypermethylated in cancer 1 protein (Hic1) (Mus musculus (Mouse)).